A 1156-amino-acid chain; its full sequence is Protein hu-li tai shao (1156 aa).

Positions 1 to 36 (MTEVEQPPQNGIDPTAGEDDDNSKARPADIEQDMRE) are disordered. Positions 22–36 (NSKARPADIEQDMRE) are enriched in basic and acidic residues. Residue serine 478 is modified to Phosphoserine. 2 positions are modified to phosphothreonine: threonine 480 and threonine 498. Serine 603 carries the phosphoserine modification. Tyrosine 608 carries the post-translational modification Phosphotyrosine. Phosphothreonine is present on residues threonine 609 and threonine 611. Serine 614 is subject to Phosphoserine. A Phosphotyrosine modification is found at tyrosine 627. A Phosphoserine modification is found at serine 630. A disordered region spans residues 897 to 956 (FLPSNHALPKDTDANNRDQTDRERPEAEQEESFHCAGDSGIGDSTGRRPRLATTSNDSSI). Basic and acidic residues predominate over residues 904-929 (LPKDTDANNRDQTDRERPEAEQEESF).

Belongs to the aldolase class II family. Adducin subfamily. Isoform C is expressed in nurse cells. Isoform A is produced in the nurse cell but transported into the oocyte at stage 1, localizes to the oocyte cortex at stage 8 and to the anterior pole from day 9 onwards. Isoform B is expressed in the somatic follicle cells that surround the germline.

The protein localises to the cytoplasm. Its subcellular location is the cytoskeleton. It is found in the cell membrane. Its function is as follows. Required for assembling actin at ring canals in developing egg chambers. Probably interacts with other developmental proteins involved in nurse cell/oocyte transport through the ring canals. Important for normal neuromotor function. In Drosophila melanogaster (Fruit fly), this protein is Protein hu-li tai shao (hts).